We begin with the raw amino-acid sequence, 469 residues long: Cysteine--tRNA ligase (469 aa).

Position 29 (Cys29) interacts with Zn(2+). The 'HIGH' region motif lies at 31 to 41 (PTVYNYIHIGN). Zn(2+)-binding residues include Cys210, His235, and Glu239. The 'KMSKS' region motif lies at 267-271 (KMSKS). Lys270 provides a ligand contact to ATP.

It belongs to the class-I aminoacyl-tRNA synthetase family. In terms of assembly, monomer. Requires Zn(2+) as cofactor.

It localises to the cytoplasm. It carries out the reaction tRNA(Cys) + L-cysteine + ATP = L-cysteinyl-tRNA(Cys) + AMP + diphosphate. The chain is Cysteine--tRNA ligase from Thermosipho melanesiensis (strain DSM 12029 / CIP 104789 / BI429).